The chain runs to 20 residues: TKQTLKVLITGAAGQIGYSL.

The chain is Unknown protein NF028 from 2D-PAGE from Naegleria fowleri (Brain eating amoeba).